We begin with the raw amino-acid sequence, 63 residues long: Laccase-C1 (63 aa).

It belongs to the multicopper oxidase family. Monomer. Requires Cu cation as cofactor. Post-translationally, glycosylated; contains 16% carbohydrates.

The protein localises to the secreted. It catalyses the reaction 4 hydroquinone + O2 = 4 benzosemiquinone + 2 H2O. Inhibited by sodium azide. Lignin degradation and detoxification of lignin-derived products. Oxidation of a broad range of substrates including mono-, di- and polyphenols, aromatic amines and methoxy-substituted phenols accompanied by reduction of oxygen to water. The polypeptide is Laccase-C1 (Cerrena unicolor (Canker rot fungus)).